The following is a 381-amino-acid chain: Putative F-box/kelch-repeat protein At1g60570 (381 aa).

Residues 19 to 65 (PTLIPSLPEELILSILARVSRLSYRSLSLVCKRFHSLLTSGEIYRFR) form the F-box domain. Kelch repeat units follow at residues 126 to 169 (KIYK…LIDG), 171 to 218 (IYVT…ERTN), 220 to 266 (LLVD…VIEN), and 269 to 314 (YDFF…DYGG).

The protein is Putative F-box/kelch-repeat protein At1g60570 of Arabidopsis thaliana (Mouse-ear cress).